A 66-amino-acid chain; its full sequence is Beta-mammal toxin Cv3 (66 aa).

Residues 1–66 (KEGYIVNYYD…VWPLPNKTCN (66 aa)) form the LCN-type CS-alpha/beta domain. Intrachain disulfides connect C12–C65, C16–C41, C25–C46, and C29–C48.

As to expression, expressed by the venom gland.

Its subcellular location is the secreted. Functionally, beta toxins bind voltage-independently at site-4 of sodium channels (Nav) and reduces peak current and shifts the voltage of activation toward more negative potentials thereby affecting sodium channel activation and promoting spontaneous and repetitive firing. This toxin is strongly toxic to mice. This Centruroides villegasi (Scorpion) protein is Beta-mammal toxin Cv3.